The primary structure comprises 260 residues: Phytolongin Phyl2.1 (260 aa).

The Longin domain maps to 12 to 114; that stretch reads CIAKGTVILA…LDNPTQHCLQ (103 aa). The chain crosses the membrane as a helical; Anchor for type IV membrane protein span at residues 231-251; that stretch reads WIVLMFDLCICLVLFGIWLWI.

It belongs to the synaptobrevin family.

It is found in the membrane. Functionally, non-SNARE longin protein involved in membrane-trafficking machinery. The protein is Phytolongin Phyl2.1 of Arabidopsis thaliana (Mouse-ear cress).